Consider the following 145-residue polypeptide: MDINEIREYLPHRYPFLLVDRVTELDVEAKRVRAYKNVTINEPFFNGHFPQHPIMPGVLIIEAMAQAAGLLGFKMMGVKPSDGTLYYFVGSDKLRFRQPVRPGDQLVLEADFLSNKRGIWKFDCRATVDGRPVCSAEIICAEQEI.

Residue histidine 48 is part of the active site.

The protein belongs to the thioester dehydratase family. FabZ subfamily.

Its subcellular location is the cytoplasm. The enzyme catalyses a (3R)-hydroxyacyl-[ACP] = a (2E)-enoyl-[ACP] + H2O. Its function is as follows. Involved in unsaturated fatty acids biosynthesis. Catalyzes the dehydration of short chain beta-hydroxyacyl-ACPs and long chain saturated and unsaturated beta-hydroxyacyl-ACPs. This chain is 3-hydroxyacyl-[acyl-carrier-protein] dehydratase FabZ, found in Stutzerimonas stutzeri (strain A1501) (Pseudomonas stutzeri).